The chain runs to 85 residues: U4-theraphotoxin-Hhn1t (85 aa).

The first 22 residues, 1–22 (MKVTLIAILTCAAVLVLHTTAA), serve as a signal peptide directing secretion. Positions 23–48 (EELEAESQLMEVGMPDTELAAVDEER) are excised as a propeptide. 3 cysteine pairs are disulfide-bonded: C52–C66, C56–C77, and C71–C82.

The protein belongs to the neurotoxin 12 (Hwtx-2) family. 02 (Hwtx-2) subfamily. In terms of tissue distribution, expressed by the venom gland.

It is found in the secreted. Postsynaptic neurotoxin. This Cyriopagopus hainanus (Chinese bird spider) protein is U4-theraphotoxin-Hhn1t.